We begin with the raw amino-acid sequence, 445 residues long: Phosphoglucosamine mutase (445 aa).

The active-site Phosphoserine intermediate is the serine 102. The Mg(2+) site is built by serine 102, aspartate 241, aspartate 243, and aspartate 245. Residue serine 102 is modified to Phosphoserine.

It belongs to the phosphohexose mutase family. Mg(2+) is required as a cofactor. In terms of processing, activated by phosphorylation.

It catalyses the reaction alpha-D-glucosamine 1-phosphate = D-glucosamine 6-phosphate. Its function is as follows. Catalyzes the conversion of glucosamine-6-phosphate to glucosamine-1-phosphate. In Sodalis glossinidius (strain morsitans), this protein is Phosphoglucosamine mutase.